A 361-amino-acid chain; its full sequence is S-adenosylmethionine decarboxylase proenzyme (361 aa).

Active-site residues include Glu11 and Glu14. The active-site Schiff-base intermediate with substrate; via pyruvic acid is Ser71. Ser71 carries the pyruvic acid (Ser); by autocatalysis modification. The Proton donor; for catalytic activity role is filled by Cys85. Catalysis depends on proton acceptor; for processing activity residues Ser234 and His247.

The protein belongs to the eukaryotic AdoMetDC family. Pyruvate is required as a cofactor. Post-translationally, is synthesized initially as an inactive proenzyme. Formation of the active enzyme involves a self-maturation process in which the active site pyruvoyl group is generated from an internal serine residue via an autocatalytic post-translational modification. Two non-identical subunits are generated from the proenzyme in this reaction, and the pyruvate is formed at the N-terminus of the alpha chain, which is derived from the carboxyl end of the proenzyme. The post-translation cleavage follows an unusual pathway, termed non-hydrolytic serinolysis, in which the side chain hydroxyl group of the serine supplies its oxygen atom to form the C-terminus of the beta chain, while the remainder of the serine residue undergoes an oxidative deamination to produce ammonia and the pyruvoyl group blocking the N-terminus of the alpha chain.

The catalysed reaction is S-adenosyl-L-methionine + H(+) = S-adenosyl 3-(methylsulfanyl)propylamine + CO2. It functions in the pathway amine and polyamine biosynthesis; S-adenosylmethioninamine biosynthesis; S-adenosylmethioninamine from S-adenosyl-L-methionine: step 1/1. This chain is S-adenosylmethionine decarboxylase proenzyme (SAMDC), found in Daucus carota (Wild carrot).